Reading from the N-terminus, the 412-residue chain is Argininosuccinate synthase (412 aa).

ATP contacts are provided by residues Ala20 to Ser28 and Ala48. L-citrulline is bound by residues Tyr100 and Ser105. Residue Gly130 coordinates ATP. 3 residues coordinate L-aspartate: Thr132, Asn136, and Asp137. Asn136 contributes to the L-citrulline binding site. L-citrulline-binding residues include Arg140, Ser189, Ser198, Glu274, and Tyr286.

This sequence belongs to the argininosuccinate synthase family. Type 1 subfamily. In terms of assembly, homotetramer.

It is found in the cytoplasm. The enzyme catalyses L-citrulline + L-aspartate + ATP = 2-(N(omega)-L-arginino)succinate + AMP + diphosphate + H(+). Its pathway is amino-acid biosynthesis; L-arginine biosynthesis; L-arginine from L-ornithine and carbamoyl phosphate: step 2/3. This chain is Argininosuccinate synthase, found in Shewanella halifaxensis (strain HAW-EB4).